We begin with the raw amino-acid sequence, 448 residues long: Glucose-6-phosphate isomerase (448 aa).

The Proton donor role is filled by glutamate 290. Residues histidine 311 and lysine 425 contribute to the active site.

It belongs to the GPI family.

The protein localises to the cytoplasm. It carries out the reaction alpha-D-glucose 6-phosphate = beta-D-fructose 6-phosphate. It functions in the pathway carbohydrate biosynthesis; gluconeogenesis. Its pathway is carbohydrate degradation; glycolysis; D-glyceraldehyde 3-phosphate and glycerone phosphate from D-glucose: step 2/4. Catalyzes the reversible isomerization of glucose-6-phosphate to fructose-6-phosphate. The polypeptide is Glucose-6-phosphate isomerase (Levilactobacillus brevis (strain ATCC 367 / BCRC 12310 / CIP 105137 / JCM 1170 / LMG 11437 / NCIMB 947 / NCTC 947) (Lactobacillus brevis)).